Reading from the N-terminus, the 286-residue chain is Phospholipase A1 (286 aa).

Positions 1–20 (MRISLACLAALCALPAGVMA) are cleaved as a signal peptide. The Periplasmic segment spans residues 21-49 (QDASVHDKPAVRGSIIANLLQDHDNPFLL). Residues 50–62 (YPYESNYLLYTWT) traverse the membrane as a beta stranded segment. At 63–81 (SDLNKEAIRSYDWAENARK) the chain is on the extracellular side. A beta stranded membrane pass occupies residues 82–96 (DEVKFQLSLAFPLWR). At 97–102 (GILGDN) the chain is on the periplasmic side. A beta stranded membrane pass occupies residues 103 to 115 (SLLGASYTQKSWW). Residues 116–125 (QLSNSKESAP) lie on the Extracellular side of the membrane. Position 123 (S123) interacts with Ca(2+). The chain crosses the membrane as a beta stranded span at residues 126–145 (FRETNYEPQLFLGFATDYQF). The Periplasmic portion of the chain corresponds to 146-147 (AG). A beta stranded membrane pass occupies residues 148–161 (WTLRDIEMGYNHDS). H159 (proton acceptor) is an active-site residue. The active-site Nucleophile is S161. The Extracellular segment spans residues 162 to 170 (NGRSDPTSR). Ca(2+) contacts are provided by R164 and S169. Residues 171–183 (SWNRLYARLMAQN) traverse the membrane as a beta stranded segment. At 184 to 185 (GN) the chain is on the periplasmic side. A beta stranded membrane pass occupies residues 186 to 195 (WLVEVKPWYV). Topologically, residues 196-213 (VGSTDDNPDITKYMGYYR) are extracellular. D201 lines the Ca(2+) pocket. A beta stranded membrane pass occupies residues 214–220 (LKVGYQL). The Periplasmic portion of the chain corresponds to 221 to 222 (GE). The chain crosses the membrane as a beta stranded span at residues 223 to 231 (AILSAQGQY). Residues 232–238 (NWNTGYG) are Extracellular-facing. A beta stranded transmembrane segment spans residues 239 to 247 (GAELGVSYP). The Periplasmic segment spans residues 248–252 (ITKHV). The beta stranded transmembrane segment at 253–262 (RAYTQIYSGY) threads the bilayer. Over 263-271 (GESLIDYNF) the chain is Extracellular. A beta stranded membrane pass occupies residues 272 to 283 (NQTRVGVGLMLN). Over 284–286 (DLF) the chain is Periplasmic.

This sequence belongs to the phospholipase A1 family. Homodimer; dimerization is reversible, and the dimeric form is the active one. The cofactor is Ca(2+).

It localises to the cell outer membrane. The catalysed reaction is a 1,2-diacyl-sn-glycero-3-phosphocholine + H2O = a 2-acyl-sn-glycero-3-phosphocholine + a fatty acid + H(+). It carries out the reaction a 1,2-diacyl-sn-glycero-3-phosphocholine + H2O = a 1-acyl-sn-glycero-3-phosphocholine + a fatty acid + H(+). Hydrolysis of phosphatidylcholine with phospholipase A2 (EC 3.1.1.4) and phospholipase A1 (EC 3.1.1.32) activities. The sequence is that of Phospholipase A1 (pldA) from Klebsiella pneumoniae.